The sequence spans 257 residues: MDIHRLPALADNYIFLLHDRQRNQAAVVDPAEAKPVLDCLETLGADLVTIYNTHHHGDHVGANRELLAKYPNLEVYGGVEDQGRIPGQTVFLRDGDRLSFADREATVYFVPGHTRGHIAYYFAPGSGETIGDLFCGDTIFAGGCGRLFEGTPAQMVQSIGKLRQLPDQTRLWCAHEYTLGNLKFALTVDPSNKDLQERFQTVQGDRQRGQATIPSWLGTEKRTNPFLRWDNPAIQARVGMTEPARVFGKLRGMKDNF.

Zn(2+) contacts are provided by H54, H56, D58, H59, H113, D137, and H175.

It belongs to the metallo-beta-lactamase superfamily. Glyoxalase II family. Monomer. The cofactor is Zn(2+).

The enzyme catalyses an S-(2-hydroxyacyl)glutathione + H2O = a 2-hydroxy carboxylate + glutathione + H(+). The protein operates within secondary metabolite metabolism; methylglyoxal degradation; (R)-lactate from methylglyoxal: step 2/2. Its function is as follows. Thiolesterase that catalyzes the hydrolysis of S-D-lactoyl-glutathione to form glutathione and D-lactic acid. The sequence is that of Hydroxyacylglutathione hydrolase from Synechocystis sp. (strain ATCC 27184 / PCC 6803 / Kazusa).